We begin with the raw amino-acid sequence, 244 residues long: 1-(5-phosphoribosyl)-5-[(5-phosphoribosylamino)methylideneamino] imidazole-4-carboxamide isomerase (244 aa).

D12 acts as the Proton acceptor in catalysis. The Proton donor role is filled by D131.

It belongs to the HisA/HisF family.

It localises to the cytoplasm. The catalysed reaction is 1-(5-phospho-beta-D-ribosyl)-5-[(5-phospho-beta-D-ribosylamino)methylideneamino]imidazole-4-carboxamide = 5-[(5-phospho-1-deoxy-D-ribulos-1-ylimino)methylamino]-1-(5-phospho-beta-D-ribosyl)imidazole-4-carboxamide. Its pathway is amino-acid biosynthesis; L-histidine biosynthesis; L-histidine from 5-phospho-alpha-D-ribose 1-diphosphate: step 4/9. The chain is 1-(5-phosphoribosyl)-5-[(5-phosphoribosylamino)methylideneamino] imidazole-4-carboxamide isomerase from Nocardioides sp. (strain ATCC BAA-499 / JS614).